The primary structure comprises 61 residues: Small ribosomal subunit protein uS14 (61 aa).

Positions 24, 27, 40, and 43 each coordinate Zn(2+).

It belongs to the universal ribosomal protein uS14 family. Zinc-binding uS14 subfamily. In terms of assembly, part of the 30S ribosomal subunit. Contacts proteins S3 and S10. Zn(2+) serves as cofactor.

Functionally, binds 16S rRNA, required for the assembly of 30S particles and may also be responsible for determining the conformation of the 16S rRNA at the A site. The protein is Small ribosomal subunit protein uS14 of Desulfovibrio desulfuricans (strain ATCC 27774 / DSM 6949 / MB).